Consider the following 399-residue polypeptide: Phosphoglycerate kinase (399 aa).

Residues 21-23 (DFN), Arg-37, 60-63 (HLGR), Arg-119, and Arg-152 each bind substrate. ATP is bound by residues Lys-205, Gly-296, Glu-327, and 353–356 (GGDT).

The protein belongs to the phosphoglycerate kinase family. Monomer.

The protein localises to the cytoplasm. It carries out the reaction (2R)-3-phosphoglycerate + ATP = (2R)-3-phospho-glyceroyl phosphate + ADP. It participates in carbohydrate degradation; glycolysis; pyruvate from D-glyceraldehyde 3-phosphate: step 2/5. The polypeptide is Phosphoglycerate kinase (Sulfurimonas denitrificans (strain ATCC 33889 / DSM 1251) (Thiomicrospira denitrificans (strain ATCC 33889 / DSM 1251))).